The chain runs to 73 residues: Large ribosomal subunit protein bL31 (73 aa).

This sequence belongs to the bacterial ribosomal protein bL31 family. Type A subfamily. As to quaternary structure, part of the 50S ribosomal subunit.

Its function is as follows. Binds the 23S rRNA. The polypeptide is Large ribosomal subunit protein bL31 (Allorhizobium ampelinum (strain ATCC BAA-846 / DSM 112012 / S4) (Agrobacterium vitis (strain S4))).